The primary structure comprises 647 residues: Replication protein E1 (647 aa).

The Nuclear localization signal signature appears at 86 to 88 (KRK). Disordered stretches follow at residues 88-107 (KFTS…HGSP) and 146-178 (QVDG…SIED). Serine 92 and serine 106 each carry phosphoserine; by host. Positions 149 to 169 (GQNGDWQSNSSQSSGVGASNS) are enriched in low complexity. Positions 182–348 (NSNRTLKSIQ…QTVLQHSFDN (167 aa)) are DNA-binding region. In terms of domain architecture, SF3 helicase spans 447-597 (IEFTAFLDAF…FPFDENGNPI (151 aa)). Position 473 to 480 (473 to 480 (GPANTGKS)) interacts with ATP. Residue lysine 554 forms a Glycyl lysine isopeptide (Lys-Gly) (interchain with G-Cter in SUMO) linkage.

The protein belongs to the papillomaviridae E1 protein family. In terms of assembly, can form hexamers. Interacts with E2 protein; this interaction increases E1 DNA binding specificity. Interacts with host DNA polymerase subunit POLA2. Interacts with host single stranded DNA-binding protein RPA1. Interacts with host TOP1; this interaction stimulates the enzymatic activity of TOP1. Post-translationally, phosphorylated. In terms of processing, sumoylated.

It localises to the host nucleus. The catalysed reaction is Couples ATP hydrolysis with the unwinding of duplex DNA by translocating in the 3'-5' direction.. It carries out the reaction ATP + H2O = ADP + phosphate + H(+). Functionally, ATP-dependent DNA 3'-5' helicase required for initiation of viral DNA replication. It forms a complex with the viral E2 protein. The E1-E2 complex binds to the replication origin which contains binding sites for both proteins. During the initial step, a dimer of E1 interacts with a dimer of protein E2 leading to a complex that binds the viral origin of replication with high specificity. Then, a second dimer of E1 displaces the E2 dimer in an ATP-dependent manner to form the E1 tetramer. Following this, two E1 monomers are added to each half of the site, which results in the formation of two E1 trimers on the viral ori. Subsequently, two hexamers will be created. The double hexamer acts as a bi-directional helicase machinery and unwinds the viral DNA and then recruits the host DNA polymerase to start replication. In Homo sapiens (Human), this protein is Replication protein E1.